A 417-amino-acid chain; its full sequence is NADH-quinone oxidoreductase subunit D (417 aa).

This sequence belongs to the complex I 49 kDa subunit family. As to quaternary structure, NDH-1 is composed of 14 different subunits. Subunits NuoB, C, D, E, F, and G constitute the peripheral sector of the complex.

It localises to the cell inner membrane. The enzyme catalyses a quinone + NADH + 5 H(+)(in) = a quinol + NAD(+) + 4 H(+)(out). Functionally, NDH-1 shuttles electrons from NADH, via FMN and iron-sulfur (Fe-S) centers, to quinones in the respiratory chain. The immediate electron acceptor for the enzyme in this species is believed to be ubiquinone. Couples the redox reaction to proton translocation (for every two electrons transferred, four hydrogen ions are translocated across the cytoplasmic membrane), and thus conserves the redox energy in a proton gradient. In Hydrogenovibrio crunogenus (strain DSM 25203 / XCL-2) (Thiomicrospira crunogena), this protein is NADH-quinone oxidoreductase subunit D.